A 418-amino-acid polypeptide reads, in one-letter code: Serine/threonine transporter SstT (418 aa).

8 helical membrane passes run 21 to 41, 49 to 69, 83 to 103, 142 to 162, 190 to 210, 217 to 237, 299 to 319, and 331 to 351; these read ILIG…AAIA, FVGA…IASI, ILFL…VVSF, ALLN…GIAL, FAPL…GFGA, LLVV…PLIV, MAGA…TLGI, and VVAA…LLLI.

This sequence belongs to the dicarboxylate/amino acid:cation symporter (DAACS) (TC 2.A.23) family.

The protein resides in the cell inner membrane. The catalysed reaction is L-serine(in) + Na(+)(in) = L-serine(out) + Na(+)(out). It catalyses the reaction L-threonine(in) + Na(+)(in) = L-threonine(out) + Na(+)(out). Involved in the import of serine and threonine into the cell, with the concomitant import of sodium (symport system). This chain is Serine/threonine transporter SstT, found in Yersinia pestis bv. Antiqua (strain Antiqua).